The primary structure comprises 260 residues: tRNA pseudouridine synthase A (260 aa).

Residue Asp-52 is the Nucleophile of the active site. Tyr-110 contributes to the substrate binding site.

It belongs to the tRNA pseudouridine synthase TruA family. As to quaternary structure, homodimer.

The catalysed reaction is uridine(38/39/40) in tRNA = pseudouridine(38/39/40) in tRNA. Formation of pseudouridine at positions 38, 39 and 40 in the anticodon stem and loop of transfer RNAs. This Spiroplasma kunkelii protein is tRNA pseudouridine synthase A.